A 391-amino-acid polypeptide reads, in one-letter code: Xylose isomerase (391 aa).

Residues H54 and D57 contribute to the active site. E181, E217, H220, D245, D255, D257, and D287 together coordinate Mg(2+).

Belongs to the xylose isomerase family. As to quaternary structure, homotetramer. The cofactor is Mg(2+).

It is found in the cytoplasm. The enzyme catalyses alpha-D-xylose = alpha-D-xylulofuranose. Involved in D-xylose catabolism. This is Xylose isomerase (xylA) from Streptomyces albus G.